The sequence spans 861 residues: E3 ubiquitin-protein ligase HECTD3 (861 aa).

Alanine 2 bears the N-acetylalanine mark. Serine 12 carries the post-translational modification Phosphoserine. Residues 219–397 enclose the DOC domain; that stretch reads DEDLIHFLYD…ASLVRYPRLE (179 aa). The HECT domain occupies 512–857; sequence YEKPLDYRWP…NCVAIDTDMS (346 aa). Cysteine 823 acts as the Glycyl thioester intermediate in catalysis.

In terms of assembly, interacts with TRIOBP. Interacts with STX8.

The protein localises to the cytoplasm. The protein resides in the perinuclear region. The enzyme catalyses S-ubiquitinyl-[E2 ubiquitin-conjugating enzyme]-L-cysteine + [acceptor protein]-L-lysine = [E2 ubiquitin-conjugating enzyme]-L-cysteine + N(6)-ubiquitinyl-[acceptor protein]-L-lysine.. It participates in protein modification; protein ubiquitination. In terms of biological role, E3 ubiquitin ligases accepts ubiquitin from an E2 ubiquitin-conjugating enzyme in the form of a thioester and then directly transfers the ubiquitin to targeted substrates. Mediates ubiquitination of TRIOBP and its subsequent proteasomal degradation, thus facilitating cell cycle progression by regulating the turn-over of TRIOBP. Also mediates ubiquitination of STX8. The sequence is that of E3 ubiquitin-protein ligase HECTD3 (Hectd3) from Mus musculus (Mouse).